Here is a 164-residue protein sequence, read N- to C-terminus: PTS system sorbose-specific EIIB component (164 aa).

The PTS EIIB type-4 domain occupies 1–164 (MQITLARIDD…DKINETAFCE (164 aa)). Catalysis depends on histidine 14, which acts as the Pros-phosphohistidine intermediate. Histidine 14 is modified (phosphohistidine; by EIIA).

Dimer of dimers.

It is found in the cytoplasm. The enzyme catalyses keto-L-sorbose(out) + N(pros)-phospho-L-histidyl-[protein] = L-sorbose 1-phosphate(in) + L-histidyl-[protein]. The phosphoenolpyruvate-dependent sugar phosphotransferase system (PTS), a major carbohydrate active transport system, catalyzes the phosphorylation of incoming sugar substrates concomitant with their translocation across the cell membrane. The enzyme II SorABFM PTS system is involved in L-sorbose transport. In Klebsiella pneumoniae, this protein is PTS system sorbose-specific EIIB component.